The primary structure comprises 144 residues: 3-dehydroquinate dehydratase (144 aa).

Tyrosine 24 acts as the Proton acceptor in catalysis. Asparagine 76, histidine 82, and aspartate 89 together coordinate substrate. Histidine 102 serves as the catalytic Proton donor. Substrate is bound by residues 103–104 and arginine 113; that span reads LS.

The protein belongs to the type-II 3-dehydroquinase family. As to quaternary structure, homododecamer.

The catalysed reaction is 3-dehydroquinate = 3-dehydroshikimate + H2O. The protein operates within metabolic intermediate biosynthesis; chorismate biosynthesis; chorismate from D-erythrose 4-phosphate and phosphoenolpyruvate: step 3/7. Its function is as follows. Catalyzes a trans-dehydration via an enolate intermediate. This is 3-dehydroquinate dehydratase from Bordetella bronchiseptica (strain ATCC BAA-588 / NCTC 13252 / RB50) (Alcaligenes bronchisepticus).